The primary structure comprises 72 residues: UPF0154 protein BPUM_1692 (72 aa).

Residues 4-24 (WVVILVGVVALLAGVALGFFI) traverse the membrane as a helical segment.

The protein belongs to the UPF0154 family.

It localises to the cell membrane. The protein is UPF0154 protein BPUM_1692 of Bacillus pumilus (strain SAFR-032).